The primary structure comprises 164 residues: Lectin (164 aa).

The signal sequence occupies residues 1–15; sequence TVATILTILASTCMA. In terms of domain architecture, Bulb-type lectin spans 16–125; that stretch reads RNVLVNNEGL…DIWSTGTYRK (110 aa). A disulfide bridge links C44 with C68.

As to quaternary structure, homotetramer. In terms of processing, not glycosylated.

Its function is as follows. Mannose-specific lectin. Induces a Th1-type immune response in vitro. Causes a 4-fold increase in the proliferation of murine thymocytes and a significant increase in the production of nitric oxide at 24 hours in a macrophage cell line. Stimulates the production of the pro-inflammatory cytokines TNF and IL12 by rat peritoneal macrophages in a dose-dependent manner and of the cytokines IFNG and IL2 in murine thymocytes. Has hemagglutination activity towards rabbit erythrocytes. This Allium cepa (Onion) protein is Lectin.